The chain runs to 545 residues: Glucose-6-phosphate isomerase (545 aa).

Catalysis depends on Glu-351, which acts as the Proton donor. Active-site residues include His-382 and Lys-510.

Belongs to the GPI family.

The protein resides in the cytoplasm. The catalysed reaction is alpha-D-glucose 6-phosphate = beta-D-fructose 6-phosphate. The protein operates within carbohydrate biosynthesis; gluconeogenesis. It participates in carbohydrate degradation; glycolysis; D-glyceraldehyde 3-phosphate and glycerone phosphate from D-glucose: step 2/4. Catalyzes the reversible isomerization of glucose-6-phosphate to fructose-6-phosphate. The chain is Glucose-6-phosphate isomerase from Shewanella halifaxensis (strain HAW-EB4).